The sequence spans 226 residues: MAYPLQLGLQDATSPIMEELTSFHDHTLMIVFLISTLVLYIISLMLTTKLTHTSTMDAQEIETIWTILPAIILIMIALPSLRVLYMMDEINNPALTVKTMGHQWYWSYEYTDYEDLSFDSYMVNTTDLKPGDLRLLEVDNRVVLPMELPIRMLISSEDVLHSWAVPSLGLKTDAIPGRLNQATVSSSRPGLFYGQCSEICGSNHSFMPIVLEMVPLKYFEAWSASM.

Over 1 to 14 (MAYPLQLGLQDATS) the chain is Mitochondrial intermembrane. A helical membrane pass occupies residues 15–45 (PIMEELTSFHDHTLMIVFLISTLVLYIISLM). At 46–59 (LTTKLTHTSTMDAQ) the chain is on the mitochondrial matrix side. The chain crosses the membrane as a helical span at residues 60-87 (EIETIWTILPAIILIMIALPSLRVLYMM). Over 88–226 (DEINNPALTV…KYFEAWSASM (139 aa)) the chain is Mitochondrial intermembrane. His161, Cys196, Glu198, Cys200, His204, and Met207 together coordinate Cu cation. Glu198 contacts Mg(2+). Tyr218 carries the phosphotyrosine modification.

The protein belongs to the cytochrome c oxidase subunit 2 family. As to quaternary structure, component of the cytochrome c oxidase (complex IV, CIV), a multisubunit enzyme composed of 14 subunits. The complex is composed of a catalytic core of 3 subunits MT-CO1, MT-CO2 and MT-CO3, encoded in the mitochondrial DNA, and 11 supernumerary subunits COX4I, COX5A, COX5B, COX6A, COX6B, COX6C, COX7A, COX7B, COX7C, COX8 and NDUFA4, which are encoded in the nuclear genome. The complex exists as a monomer or a dimer and forms supercomplexes (SCs) in the inner mitochondrial membrane with NADH-ubiquinone oxidoreductase (complex I, CI) and ubiquinol-cytochrome c oxidoreductase (cytochrome b-c1 complex, complex III, CIII), resulting in different assemblies (supercomplex SCI(1)III(2)IV(1) and megacomplex MCI(2)III(2)IV(2)). Found in a complex with TMEM177, COA6, COX18, COX20, SCO1 and SCO2. Interacts with TMEM177 in a COX20-dependent manner. Interacts with COX20. Interacts with COX16. Cu cation serves as cofactor.

It localises to the mitochondrion inner membrane. The enzyme catalyses 4 Fe(II)-[cytochrome c] + O2 + 8 H(+)(in) = 4 Fe(III)-[cytochrome c] + 2 H2O + 4 H(+)(out). Component of the cytochrome c oxidase, the last enzyme in the mitochondrial electron transport chain which drives oxidative phosphorylation. The respiratory chain contains 3 multisubunit complexes succinate dehydrogenase (complex II, CII), ubiquinol-cytochrome c oxidoreductase (cytochrome b-c1 complex, complex III, CIII) and cytochrome c oxidase (complex IV, CIV), that cooperate to transfer electrons derived from NADH and succinate to molecular oxygen, creating an electrochemical gradient over the inner membrane that drives transmembrane transport and the ATP synthase. Cytochrome c oxidase is the component of the respiratory chain that catalyzes the reduction of oxygen to water. Electrons originating from reduced cytochrome c in the intermembrane space (IMS) are transferred via the dinuclear copper A center (CU(A)) of subunit 2 and heme A of subunit 1 to the active site in subunit 1, a binuclear center (BNC) formed by heme A3 and copper B (CU(B)). The BNC reduces molecular oxygen to 2 water molecules using 4 electrons from cytochrome c in the IMS and 4 protons from the mitochondrial matrix. The polypeptide is Cytochrome c oxidase subunit 2 (MT-CO2) (Perognathus flavus (Silky pocket mouse)).